A 262-amino-acid chain; its full sequence is DNA-directed RNA polymerase subunit Rpo3 (262 aa).

The protein belongs to the archaeal Rpo3/eukaryotic RPB3 RNA polymerase subunit family. As to quaternary structure, part of the RNA polymerase complex.

It localises to the cytoplasm. The catalysed reaction is RNA(n) + a ribonucleoside 5'-triphosphate = RNA(n+1) + diphosphate. Functionally, DNA-dependent RNA polymerase (RNAP) catalyzes the transcription of DNA into RNA using the four ribonucleoside triphosphates as substrates. The protein is DNA-directed RNA polymerase subunit Rpo3 of Pyrobaculum neutrophilum (strain DSM 2338 / JCM 9278 / NBRC 100436 / V24Sta) (Thermoproteus neutrophilus).